Consider the following 184-residue polypeptide: Large ribosomal subunit protein uL6 (184 aa).

It belongs to the universal ribosomal protein uL6 family. As to quaternary structure, part of the 50S ribosomal subunit.

Functionally, this protein binds to the 23S rRNA, and is important in its secondary structure. It is located near the subunit interface in the base of the L7/L12 stalk, and near the tRNA binding site of the peptidyltransferase center. The chain is Large ribosomal subunit protein uL6 from Desulfitobacterium hafniense (strain Y51).